Here is a 545-residue protein sequence, read N- to C-terminus: T-complex protein 1 subunit alpha (545 aa).

At Ser2 the chain carries N-acetylserine.

The protein belongs to the TCP-1 chaperonin family. As to quaternary structure, heterooligomeric complex of about 850 to 900 kDa that forms two stacked rings, 12 to 16 nm in diameter.

It is found in the cytoplasm. Molecular chaperone; assists the folding of proteins upon ATP hydrolysis. Known to play a role, in vitro, in the folding of actin and tubulin. The protein is T-complex protein 1 subunit alpha of Arabidopsis thaliana (Mouse-ear cress).